The primary structure comprises 602 residues: Probable translation initiation factor IF-2 (602 aa).

The 216-residue stretch at 18-233 folds into the tr-type G domain; the sequence is LRTPIVCVMG…LVGLAQRFLK (216 aa). The G1 stretch occupies residues 27-34; sequence GHVDHGKT. Position 27–34 (27–34) interacts with GTP; that stretch reads GHVDHGKT. Residues 52–56 are G2; that stretch reads AITQH. Residues 88–91 are G3; it reads DTPG. Residues 88–92 and 142–145 each bind GTP; these read DTPGH and NKID. The tract at residues 142-145 is G4; sequence NKID. The tract at residues 210–212 is G5; sequence SAI.

Belongs to the TRAFAC class translation factor GTPase superfamily. Classic translation factor GTPase family. IF-2 subfamily.

In terms of biological role, function in general translation initiation by promoting the binding of the formylmethionine-tRNA to ribosomes. Seems to function along with eIF-2. In Methanothrix thermoacetophila (strain DSM 6194 / JCM 14653 / NBRC 101360 / PT) (Methanosaeta thermophila), this protein is Probable translation initiation factor IF-2.